The primary structure comprises 261 residues: Hemin import ATP-binding protein HmuV (261 aa).

The ABC transporter domain occupies 3–243 (LQAQDLSVDR…ANLRRVYGVE (241 aa)). 35–42 (GANGAGKS) contacts ATP.

It belongs to the ABC transporter superfamily. Heme (hemin) importer (TC 3.A.1.14.5) family. The complex is composed of two ATP-binding proteins (HmuV), two transmembrane proteins (HmuU) and a solute-binding protein (HmuT).

Its subcellular location is the cell inner membrane. Its function is as follows. Part of the ABC transporter complex HmuTUV involved in hemin import. Responsible for energy coupling to the transport system. The polypeptide is Hemin import ATP-binding protein HmuV (Bordetella avium (strain 197N)).